Reading from the N-terminus, the 262-residue chain is MQVDLQSSAQSAHALHLFHQHSPLVHCMTNDVVQTFTANTLLALGASPAMVIETEEASQFAAIASALLINVGTLTQLRAQSMCAAVEQAKSSQTPWTLDPVAVGALDYRRRFCLELLPHKPTAIRGNASEIMALAGIANGGRGVDTTDAAANAIPAAQTLARETGAIVVVTGEMDYVTDGHRIIGIHGGDPLMTKVVGTGCALSAVVAACCALPGDTLENVASACHWMKQAGERAVARSEGPGSFVPHFLDALWQLTQEVQA.

Met50 serves as a coordination point for substrate. ATP-binding residues include Arg125 and Thr171. Residue Gly198 coordinates substrate.

Belongs to the Thz kinase family. Requires Mg(2+) as cofactor.

The enzyme catalyses 5-(2-hydroxyethyl)-4-methylthiazole + ATP = 4-methyl-5-(2-phosphooxyethyl)-thiazole + ADP + H(+). It participates in cofactor biosynthesis; thiamine diphosphate biosynthesis; 4-methyl-5-(2-phosphoethyl)-thiazole from 5-(2-hydroxyethyl)-4-methylthiazole: step 1/1. In terms of biological role, catalyzes the phosphorylation of the hydroxyl group of 4-methyl-5-beta-hydroxyethylthiazole (THZ). The polypeptide is Hydroxyethylthiazole kinase (Shigella boydii serotype 4 (strain Sb227)).